The sequence spans 192 residues: Fe/S biogenesis protein NfuA (192 aa).

Residues C150 and C153 each coordinate [4Fe-4S] cluster.

It belongs to the NfuA family. In terms of assembly, homodimer. Requires [4Fe-4S] cluster as cofactor.

In terms of biological role, involved in iron-sulfur cluster biogenesis. Binds a 4Fe-4S cluster, can transfer this cluster to apoproteins, and thereby intervenes in the maturation of Fe/S proteins. Could also act as a scaffold/chaperone for damaged Fe/S proteins. The sequence is that of Fe/S biogenesis protein NfuA from Ruthia magnifica subsp. Calyptogena magnifica.